The chain runs to 266 residues: Glucosamine-6-phosphate deaminase (266 aa).

Aspartate 72 acts as the Proton acceptor; for enolization step in catalysis. Aspartate 141 (for ring-opening step) is an active-site residue. The Proton acceptor; for ring-opening step role is filled by histidine 143. The For ring-opening step role is filled by glutamate 148.

The protein belongs to the glucosamine/galactosamine-6-phosphate isomerase family. NagB subfamily. Homohexamer; trimer of disulfide-linked dimers.

The catalysed reaction is alpha-D-glucosamine 6-phosphate + H2O = beta-D-fructose 6-phosphate + NH4(+). The protein operates within amino-sugar metabolism; N-acetylneuraminate degradation; D-fructose 6-phosphate from N-acetylneuraminate: step 5/5. With respect to regulation, allosterically activated by N-acetylglucosamine 6-phosphate (GlcNAc6P). Functionally, catalyzes the reversible isomerization-deamination of glucosamine 6-phosphate (GlcN6P) to form fructose 6-phosphate (Fru6P) and ammonium ion. The sequence is that of Glucosamine-6-phosphate deaminase from Shigella flexneri serotype 5b (strain 8401).